The chain runs to 486 residues: Small ribosomal subunit protein uS17B (486 aa).

The tract at residues 1 to 112 is 30S ribosomal protein S17; the sequence is MRDIGINGIK…IENKSNINFV (112 aa). Residues 113–486 form a unknown region; it reads DNLLNVDDKW…ELWTRKNYKS (374 aa).

Belongs to the universal ribosomal protein uS17 family. In terms of assembly, part of the 30S ribosomal subunit.

Its function is as follows. One of the primary rRNA binding proteins, it binds specifically to the 5'-end of 16S ribosomal RNA. The sequence is that of Small ribosomal subunit protein uS17B from Methanosarcina acetivorans (strain ATCC 35395 / DSM 2834 / JCM 12185 / C2A).